A 328-amino-acid polypeptide reads, in one-letter code: D-alanine--D-alanine ligase (328 aa).

Residues 118 to 317 (LSVLTKFNIP…MPQMLDNEIT (200 aa)) form the ATP-grasp domain. Residue 146-201 (KKALGLPFFVKPNQSGSSLGVSKVDALDQLEKALEFAFAEDNEILIESYLNGTEVS) participates in ATP binding. Residues D272, E284, and N286 each coordinate Mg(2+).

The protein belongs to the D-alanine--D-alanine ligase family. Mg(2+) serves as cofactor. Mn(2+) is required as a cofactor.

It localises to the cytoplasm. The catalysed reaction is 2 D-alanine + ATP = D-alanyl-D-alanine + ADP + phosphate + H(+). It participates in cell wall biogenesis; peptidoglycan biosynthesis. Functionally, cell wall formation. This chain is D-alanine--D-alanine ligase, found in Flavobacterium psychrophilum (strain ATCC 49511 / DSM 21280 / CIP 103535 / JIP02/86).